The chain runs to 374 residues: MPLLTTPYAELDLIRQPDQANDPLQAFDAADEYLLEQLHAQQLAAESRVLVLNDSFGALAASLVDHVSVVSSGDSHLAHMALEKNLARNGKAFDSVPFVPASEHWQGHFDRVLVRVPKTLALLEEQLIRLQGHLAPGAQVIAAAMIKHLPRAAGELLEKYIGPVQASLAQKKARLLTANFAQRPGASSPYPTRYRLDSPALELLNHANVFCRDGLDIGTRAFLPHLPRDLGNARVADLGCGNGVLAIANALTNPQAHYTLVDESYMAVQSAQENWQAALGDRAVTVLAGDGLAGVEKQSLDVVLCNPPFHQQQVVGDFLAWRMFQQAREALVVGGALYIVGNRHLGYHSKLARLFRGVEQVAATPKFVILKARK.

This sequence belongs to the methyltransferase superfamily. RlmG family.

Its subcellular location is the cytoplasm. The enzyme catalyses guanosine(1835) in 23S rRNA + S-adenosyl-L-methionine = N(2)-methylguanosine(1835) in 23S rRNA + S-adenosyl-L-homocysteine + H(+). Specifically methylates the guanine in position 1835 (m2G1835) of 23S rRNA. This chain is Ribosomal RNA large subunit methyltransferase G, found in Pseudomonas putida (strain W619).